Reading from the N-terminus, the 291-residue chain is Pca regulon regulatory protein (291 aa).

Positions 1–22 (MSDETLVNDPVNPEPARPASAA) are disordered. An HTH iclR-type domain is found at 45–105 (MTSLARGLAV…SDGRTYSLLP (61 aa)). A DNA-binding region (H-T-H motif) is located at residues 67-86 (IAQISHRTEIPRAAVRRCLH). In terms of domain architecture, IclR-ED spans 120-291 (LAISAQPYLD…SRDLCHQLFG (172 aa)).

Functionally, positive regulator of all genes within the pca regulon, pcaBDC, pcaIJ and pcaF. Also required for the chemotactic response to aromatic compounds. The chain is Pca regulon regulatory protein (pcaR) from Pseudomonas putida (Arthrobacter siderocapsulatus).